The chain runs to 375 residues: CLIP domain-containing serine protease B14 (375 aa).

Positions M1–G24 are cleaved as a signal peptide. The Clip domain occupies P29 to C83. Intrachain disulfides connect C30/C82, C40/C71, and C46/C83. N-linked (GlcNAc...) asparagine glycosylation occurs at N34. A Peptidase S1 domain is found at I101–F370. N-linked (GlcNAc...) asparagine glycosylation occurs at N105. C131 and C147 are disulfide-bonded. Residues H146 and D213 each act as charge relay system in the active site. A glycan (N-linked (GlcNAc...) asparagine) is linked at N238. 2 cysteine pairs are disulfide-bonded: C289–C307 and C317–C346. S321 functions as the Charge relay system in the catalytic mechanism. The N-linked (GlcNAc...) asparagine glycan is linked to N357.

It belongs to the peptidase S1 family. CLIP subfamily. N-glycosylated. Post-translationally, proteolytically cleaved. As to expression, expressed by a subpopulation of hemocytes.

Its subcellular location is the secreted. Serine protease. Plays a role in innate immunity against infections by parasite P.berghei and by Gram-negative bacteria such as E.coli. In response to P.berghei infection, contributes to the clearing of parasite ookinetes independent of melanization, an innate immune response which consists in the deposition of melanin pigments on invading pathogens and parasites. May play a role in non-septic wound healing. The polypeptide is CLIP domain-containing serine protease B14 (Anopheles gambiae (African malaria mosquito)).